The primary structure comprises 353 residues: Ribosomal RNA small subunit methyltransferase H (353 aa).

S-adenosyl-L-methionine is bound by residues 39–41 (AGH), aspartate 58, phenylalanine 90, aspartate 108, and glutamine 115. The disordered stretch occupies residues 334 to 353 (SEDGVRGAHGHRRRTQARRG). Residues 341–353 (AHGHRRRTQARRG) show a composition bias toward basic residues.

This sequence belongs to the methyltransferase superfamily. RsmH family.

It localises to the cytoplasm. The catalysed reaction is cytidine(1402) in 16S rRNA + S-adenosyl-L-methionine = N(4)-methylcytidine(1402) in 16S rRNA + S-adenosyl-L-homocysteine + H(+). Its function is as follows. Specifically methylates the N4 position of cytidine in position 1402 (C1402) of 16S rRNA. This chain is Ribosomal RNA small subunit methyltransferase H, found in Bifidobacterium animalis subsp. lactis (strain AD011).